A 247-amino-acid chain; its full sequence is Uridylate kinase (247 aa).

Residue Lys-14–Gly-17 participates in ATP binding. The tract at residues Gly-22–Gly-27 is involved in allosteric activation by GTP. Gly-56 is a UMP binding site. The ATP site is built by Gly-57 and Arg-61. UMP-binding positions include Asp-76 and Ile-137–Thr-144. The ATP site is built by Asn-165, Tyr-171, and Asp-174.

It belongs to the UMP kinase family. Homohexamer.

The protein localises to the cytoplasm. It carries out the reaction UMP + ATP = UDP + ADP. The protein operates within pyrimidine metabolism; CTP biosynthesis via de novo pathway; UDP from UMP (UMPK route): step 1/1. With respect to regulation, allosterically activated by GTP. Inhibited by UTP, 5-bromo-UTP and 5-iodo-UTP. Catalyzes the reversible phosphorylation of UMP to UDP, with ATP as the most efficient phosphate donor. The polypeptide is Uridylate kinase (pyrH) (Streptococcus pneumoniae serotype 4 (strain ATCC BAA-334 / TIGR4)).